The following is a 268-amino-acid chain: Ubiquinone biosynthesis protein COQ4 homolog, mitochondrial (268 aa).

Residues 1–25 (MMQRCLRLQKPLALRRGLHLAQVNS) constitute a mitochondrion transit peptide. Zn(2+) is bound by residues H171, D172, H175, and E187.

Belongs to the COQ4 family. Component of a multi-subunit COQ enzyme complex. Zn(2+) is required as a cofactor.

Its subcellular location is the mitochondrion inner membrane. The enzyme catalyses a 4-hydroxy-3-methoxy-5-(all-trans-polyprenyl)benzoate + H(+) = a 2-methoxy-6-(all-trans-polyprenyl)phenol + CO2. It participates in cofactor biosynthesis; ubiquinone biosynthesis. In terms of biological role, lyase that catalyzes the C1-decarboxylation of 4-hydroxy-3-methoxy-5-(all-trans-polyprenyl)benzoic acid into 2-methoxy-6-(all-trans-polyprenyl)phenol during ubiquinone biosynthesis. The protein is Ubiquinone biosynthesis protein COQ4 homolog, mitochondrial of Drosophila simulans (Fruit fly).